Here is a 496-residue protein sequence, read N- to C-terminus: Probable cytosol aminopeptidase (496 aa).

Mn(2+)-binding residues include K266 and D271. Residue K278 is part of the active site. D289, D348, and E350 together coordinate Mn(2+). R352 is a catalytic residue.

The protein belongs to the peptidase M17 family. It depends on Mn(2+) as a cofactor.

The protein localises to the cytoplasm. The catalysed reaction is Release of an N-terminal amino acid, Xaa-|-Yaa-, in which Xaa is preferably Leu, but may be other amino acids including Pro although not Arg or Lys, and Yaa may be Pro. Amino acid amides and methyl esters are also readily hydrolyzed, but rates on arylamides are exceedingly low.. It catalyses the reaction Release of an N-terminal amino acid, preferentially leucine, but not glutamic or aspartic acids.. Presumably involved in the processing and regular turnover of intracellular proteins. Catalyzes the removal of unsubstituted N-terminal amino acids from various peptides. The protein is Probable cytosol aminopeptidase of Azotobacter vinelandii (strain DJ / ATCC BAA-1303).